The chain runs to 284 residues: 2-dehydro-3-deoxyphosphooctonate aldolase (284 aa).

Belongs to the KdsA family.

The protein localises to the cytoplasm. The enzyme catalyses D-arabinose 5-phosphate + phosphoenolpyruvate + H2O = 3-deoxy-alpha-D-manno-2-octulosonate-8-phosphate + phosphate. It participates in carbohydrate biosynthesis; 3-deoxy-D-manno-octulosonate biosynthesis; 3-deoxy-D-manno-octulosonate from D-ribulose 5-phosphate: step 2/3. The protein operates within bacterial outer membrane biogenesis; lipopolysaccharide biosynthesis. The polypeptide is 2-dehydro-3-deoxyphosphooctonate aldolase (Shigella boydii serotype 18 (strain CDC 3083-94 / BS512)).